A 210-amino-acid polypeptide reads, in one-letter code: 3-hexulose-6-phosphate synthase (210 aa).

Belongs to the HPS/KGPDC family. HPS subfamily.

The catalysed reaction is D-ribulose 5-phosphate + formaldehyde = D-arabino-hex-3-ulose 6-phosphate. It participates in one-carbon metabolism; formaldehyde assimilation via RuMP pathway; D-fructose 6-phosphate from D-ribulose 5-phosphate and formaldehyde: step 1/2. Its function is as follows. Catalyzes the condensation of ribulose 5-phosphate with formaldehyde to form 3-hexulose 6-phosphate. The protein is 3-hexulose-6-phosphate synthase of Staphylococcus epidermidis (strain ATCC 35984 / DSM 28319 / BCRC 17069 / CCUG 31568 / BM 3577 / RP62A).